Reading from the N-terminus, the 858-residue chain is Low-density lipoprotein receptor-related protein 12 (858 aa).

The N-terminal stretch at 1-32 (MARRWSTKESQRRGSAWLLLFLAGVYGNGALA) is a signal peptide. Over 33–492 (ELSENVHISG…ENCPVIVPTR (460 aa)) the chain is Extracellular. 9 cysteine pairs are disulfide-bonded: Cys-47–Cys-76, Cys-103–Cys-122, Cys-166–Cys-178, Cys-173–Cys-191, Cys-185–Cys-200, Cys-215–Cys-232, Cys-222–Cys-245, Cys-239–Cys-254, and Cys-259–Cys-285. The CUB 1 domain maps to 47 to 159 (CGESPEQIRA…KGFRLAYFSG (113 aa)). The N-linked (GlcNAc...) asparagine glycan is linked to Asn-75. LDL-receptor class A domains are found at residues 165-201 (DCACDQFRCGNGKCIPEAWKCNSMDECGDSSDEEVCA) and 214-255 (PCAY…IDCD). The CUB 2 domain occupies 259–372 (CGQWLKYFYG…RGFNATYQVD (114 aa)). 2 N-linked (GlcNAc...) asparagine glycosylation sites follow: Asn-284 and Asn-366. LDL-receptor class A domains follow at residues 374 to 411 (FCLPWEIPCGGNWGCYTEQQRCDGYWHCPNGRDEINCT), 412 to 449 (MCQKEEFPCSRNGVCYPRSDRCNYQNHCPNGSDEKNCF), and 450 to 486 (FCQPGNFHCKNNRCVFESWVCDSQDDCGDGSDEENCP). Cystine bridges form between Cys-375/Cys-388, Cys-382/Cys-401, Cys-395/Cys-410, Cys-413/Cys-426, Cys-420/Cys-439, Cys-433/Cys-448, Cys-451/Cys-463, Cys-458/Cys-476, and Cys-470/Cys-485. Asn-409 carries N-linked (GlcNAc...) asparagine glycosylation. Asn-441 carries N-linked (GlcNAc...) asparagine glycosylation. Residues 493–513 (VITAAVIGSLICGLLLVIALG) form a helical membrane-spanning segment. Topologically, residues 514–858 (CTCKLYSLRM…TSDDEALLLC (345 aa)) are cytoplasmic. Disordered stretches follow at residues 619–721 (ALVS…VSPA) and 746–767 (SSSTTQNRSPLRQLDTAVSGRE). The span at 712-721 (SVEAPSVSPA) shows a compositional bias: low complexity. Residues 746 to 755 (SSSTTQNRSP) are compositionally biased toward polar residues.

Belongs to the LDLR family. In terms of assembly, may interact with RACK1, ZFYVE9 and NMRK2.

The protein localises to the membrane. Its subcellular location is the coated pit. Functionally, probable receptor, which may be involved in the internalization of lipophilic molecules and/or signal transduction. May act as a tumor suppressor. This chain is Low-density lipoprotein receptor-related protein 12 (Lrp12), found in Mus musculus (Mouse).